We begin with the raw amino-acid sequence, 453 residues long: Lysine histidine transporter-like 1 (453 aa).

Over 1–44 (MYIQMTDGVPPPPEQSSLDHRIDELERQKEIDDWLPITSSRNAK) the chain is Cytoplasmic. 2 helical membrane passes run 45 to 65 (WWYS…LGLP) and 66 to 86 (FFMA…SWII). Residues 87-122 (TLYTLWQMVEMHEMVPGKRFDRYHELGQFAFGERLG) are Cytoplasmic-facing. Residues 123 to 143 (LYIIVPQQIIVEVGVCIVYMV) traverse the membrane as a helical segment. Residues 144-164 (TGGQSLKKFHEIACQDCSPIR) lie on the Extracellular side of the membrane. A helical transmembrane segment spans residues 165 to 185 (LSFFIMIFASSHFVLSHLPNF). Topologically, residues 186-187 (NS) are cytoplasmic. A helical transmembrane segment spans residues 188–208 (ISGVSLVAAVMSLSYSTIAWT). Residues 209 to 231 (ATAAKGVQEDVQYGYKSGTTAST) are Extracellular-facing. A helical membrane pass occupies residues 232–252 (VLSFFTGLGGIAFAYAGHNVV). The Cytoplasmic segment spans residues 253–276 (LEIQATIPSTPSNPSKGPMWRGVV). Residues 277 to 297 (VAYVVVALCYFPVALVGYGVF) form a helical membrane-spanning segment. At 298-318 (GNAVLDNVLMSLETPVWAIAT) the chain is on the extracellular side. A helical transmembrane segment spans residues 319–339 (ANLFVVMHVIGSYQIFAMPVF). The Cytoplasmic portion of the chain corresponds to 340-359 (DMVETFLVKKLNFKPSTVLR). A helical transmembrane segment spans residues 360 to 382 (FIVRNVYVALTMFIGIMIPFFGG). The Extracellular portion of the chain corresponds to 383–385 (LLA). Residues 386–408 (FFGGFAFAPTSYFLPCIMWLLIY) form a helical membrane-spanning segment. Residues 409–412 (KPKR) lie on the Cytoplasmic side of the membrane. Residues 413-433 (FSLSWWTNWVCIVLGVVLMIL) form a helical membrane-spanning segment. The Extracellular portion of the chain corresponds to 434–453 (SSIGGLRQIIIQSKDYSFFS).

The protein belongs to the amino acid/polyamine transporter 2 family. Amino acid/auxin permease (AAAP) (TC 2.A.18.2) subfamily.

The protein resides in the cell membrane. Functionally, amino acid transporter. The chain is Lysine histidine transporter-like 1 from Arabidopsis thaliana (Mouse-ear cress).